Here is a 165-residue protein sequence, read N- to C-terminus: Peptide deformylase (165 aa).

Fe cation is bound by residues Cys-93 and His-135. Glu-136 is a catalytic residue. His-139 is a Fe cation binding site.

It belongs to the polypeptide deformylase family. Fe(2+) is required as a cofactor.

It carries out the reaction N-terminal N-formyl-L-methionyl-[peptide] + H2O = N-terminal L-methionyl-[peptide] + formate. Removes the formyl group from the N-terminal Met of newly synthesized proteins. Requires at least a dipeptide for an efficient rate of reaction. N-terminal L-methionine is a prerequisite for activity but the enzyme has broad specificity at other positions. This Thermodesulfovibrio yellowstonii (strain ATCC 51303 / DSM 11347 / YP87) protein is Peptide deformylase.